The chain runs to 260 residues: tRNA pseudouridine synthase A (260 aa).

D52 functions as the Nucleophile in the catalytic mechanism. Position 110 (Y110) interacts with substrate.

It belongs to the tRNA pseudouridine synthase TruA family. In terms of assembly, homodimer.

The enzyme catalyses uridine(38/39/40) in tRNA = pseudouridine(38/39/40) in tRNA. In terms of biological role, formation of pseudouridine at positions 38, 39 and 40 in the anticodon stem and loop of transfer RNAs. In Thiobacillus denitrificans (strain ATCC 25259 / T1), this protein is tRNA pseudouridine synthase A.